We begin with the raw amino-acid sequence, 827 residues long: Leucine--tRNA ligase (827 aa).

Positions 46–56 (PYPSGRIHMGH) match the 'HIGH' region motif. A 'KMSKS' region motif is present at residues 585 to 589 (KMSKS). Residue lysine 588 participates in ATP binding.

It belongs to the class-I aminoacyl-tRNA synthetase family.

The protein resides in the cytoplasm. It catalyses the reaction tRNA(Leu) + L-leucine + ATP = L-leucyl-tRNA(Leu) + AMP + diphosphate. The chain is Leucine--tRNA ligase from Desulfotalea psychrophila (strain LSv54 / DSM 12343).